A 680-amino-acid polypeptide reads, in one-letter code: Epithelial splicing regulatory protein 1 (680 aa).

3 RRM domains span residues 224-301, 325-405, and 444-524; these read TVVR…KATG, VIVR…RSTA, and DCIR…QCSA. Residue S542 is modified to Phosphoserine. Position 581 is an omega-N-methylarginine (R581).

It belongs to the ESRP family. As to expression, epithelial cell-specific. Epithelial-specific expression in diverse tissues and organs with particularly notable levels of expression in skin and gastrointestinal epithelia.

It localises to the nucleus. In terms of biological role, mRNA splicing factor that regulates the formation of epithelial cell-specific isoforms. Specifically regulates the expression of FGFR2-IIIb, an epithelial cell-specific isoform of FGFR2. Also regulates the splicing of CD44, CTNND1, ENAH, 3 transcripts that undergo changes in splicing during the epithelial-to-mesenchymal transition (EMT). Acts by directly binding specific sequences in mRNAs. Binds the GU-rich sequence motifs in the ISE/ISS-3, a cis-element regulatory region present in the mRNA of FGFR2. Regulates splicing and expression of genes involved in inner ear development, auditory hair cell differentiation, and cell fate specification in the cochlear epithelium. The polypeptide is Epithelial splicing regulatory protein 1 (Esrp1) (Mus musculus (Mouse)).